The following is a 166-amino-acid chain: Deoxyuridine 5'-triphosphate nucleotidohydrolase (166 aa).

Residues 1 to 24 (MACVNEPSPKLQKLDRNGIHGDSS) form a disordered region. Glutamate 138 contributes to the Mg(2+) binding site.

Belongs to the dUTPase family. As to quaternary structure, homotrimer. Mg(2+) serves as cofactor.

It carries out the reaction dUTP + H2O = dUMP + diphosphate + H(+). The protein operates within pyrimidine metabolism; dUMP biosynthesis; dUMP from dCTP (dUTP route): step 2/2. Its function is as follows. This enzyme is involved in nucleotide metabolism: it produces dUMP, the immediate precursor of thymidine nucleotides and it decreases the intracellular concentration of dUTP, preventing uracil incorporation into DNA. The chain is Deoxyuridine 5'-triphosphate nucleotidohydrolase (DUT) from Arabidopsis thaliana (Mouse-ear cress).